The following is a 276-amino-acid chain: Type III pantothenate kinase (276 aa).

ATP is bound at residue 18-25 (EIGNSRLH). Substrate contacts are provided by residues Tyr116 and 120-123 (GIDR). Asp122 functions as the Proton acceptor in the catalytic mechanism. Position 142 (Asp142) interacts with K(+). Residue Thr145 coordinates ATP. Residue Thr200 participates in substrate binding.

Belongs to the type III pantothenate kinase family. As to quaternary structure, homodimer. NH4(+) serves as cofactor. It depends on K(+) as a cofactor.

The protein resides in the cytoplasm. The enzyme catalyses (R)-pantothenate + ATP = (R)-4'-phosphopantothenate + ADP + H(+). Its pathway is cofactor biosynthesis; coenzyme A biosynthesis; CoA from (R)-pantothenate: step 1/5. In terms of biological role, catalyzes the phosphorylation of pantothenate (Pan), the first step in CoA biosynthesis. The polypeptide is Type III pantothenate kinase (Nostoc sp. (strain PCC 7120 / SAG 25.82 / UTEX 2576)).